The sequence spans 220 residues: N-(5'-phosphoribosyl)anthranilate isomerase (220 aa).

Belongs to the TrpF family.

The catalysed reaction is N-(5-phospho-beta-D-ribosyl)anthranilate = 1-(2-carboxyphenylamino)-1-deoxy-D-ribulose 5-phosphate. It functions in the pathway amino-acid biosynthesis; L-tryptophan biosynthesis; L-tryptophan from chorismate: step 3/5. This is N-(5'-phosphoribosyl)anthranilate isomerase from Bordetella petrii (strain ATCC BAA-461 / DSM 12804 / CCUG 43448).